Here is a 94-residue protein sequence, read N- to C-terminus: Putative pterin-4-alpha-carbinolamine dehydratase (94 aa).

It belongs to the pterin-4-alpha-carbinolamine dehydratase family.

The enzyme catalyses (4aS,6R)-4a-hydroxy-L-erythro-5,6,7,8-tetrahydrobiopterin = (6R)-L-erythro-6,7-dihydrobiopterin + H2O. This Mycobacteroides abscessus (strain ATCC 19977 / DSM 44196 / CCUG 20993 / CIP 104536 / JCM 13569 / NCTC 13031 / TMC 1543 / L948) (Mycobacterium abscessus) protein is Putative pterin-4-alpha-carbinolamine dehydratase.